Consider the following 432-residue polypeptide: Adenylosuccinate synthetase (432 aa).

Residues 13–19 (GDEGKGK) and 41–43 (GHT) contribute to the GTP site. Aspartate 14 serves as the catalytic Proton acceptor. Mg(2+) contacts are provided by aspartate 14 and glycine 41. IMP-binding positions include 14–17 (DEGK), 39–42 (NAGH), threonine 130, arginine 144, glutamine 225, threonine 240, and arginine 304. Histidine 42 (proton donor) is an active-site residue. 300 to 306 (AVTGRPR) contacts substrate. Residues arginine 306, 332–334 (KLD), and 415–417 (STG) each bind GTP.

This sequence belongs to the adenylosuccinate synthetase family. As to quaternary structure, homodimer. Requires Mg(2+) as cofactor.

It is found in the cytoplasm. The enzyme catalyses IMP + L-aspartate + GTP = N(6)-(1,2-dicarboxyethyl)-AMP + GDP + phosphate + 2 H(+). It participates in purine metabolism; AMP biosynthesis via de novo pathway; AMP from IMP: step 1/2. Its function is as follows. Plays an important role in the de novo pathway of purine nucleotide biosynthesis. Catalyzes the first committed step in the biosynthesis of AMP from IMP. This Haemophilus ducreyi (strain 35000HP / ATCC 700724) protein is Adenylosuccinate synthetase.